A 308-amino-acid polypeptide reads, in one-letter code: Transaldolase (308 aa).

Catalysis depends on K125, which acts as the Schiff-base intermediate with substrate.

The protein belongs to the transaldolase family. Type 1 subfamily. Homodimer.

The protein resides in the cytoplasm. The catalysed reaction is D-sedoheptulose 7-phosphate + D-glyceraldehyde 3-phosphate = D-erythrose 4-phosphate + beta-D-fructose 6-phosphate. It functions in the pathway carbohydrate degradation; pentose phosphate pathway; D-glyceraldehyde 3-phosphate and beta-D-fructose 6-phosphate from D-ribose 5-phosphate and D-xylulose 5-phosphate (non-oxidative stage): step 2/3. In terms of biological role, transaldolase is important for the balance of metabolites in the pentose-phosphate pathway. The chain is Transaldolase from Pseudomonas savastanoi pv. phaseolicola (strain 1448A / Race 6) (Pseudomonas syringae pv. phaseolicola (strain 1448A / Race 6)).